Consider the following 159-residue polypeptide: Small ribosomal subunit protein uS9 (159 aa).

This sequence belongs to the universal ribosomal protein uS9 family.

In Rickettsia peacockii (strain Rustic), this protein is Small ribosomal subunit protein uS9.